The primary structure comprises 89 residues: Small ribosomal subunit protein uS14A (89 aa).

It belongs to the universal ribosomal protein uS14 family. Part of the 30S ribosomal subunit. Contacts proteins S3 and S10.

Binds 16S rRNA, required for the assembly of 30S particles and may also be responsible for determining the conformation of the 16S rRNA at the A site. The protein is Small ribosomal subunit protein uS14A of Limosilactobacillus reuteri (strain DSM 20016) (Lactobacillus reuteri).